The primary structure comprises 933 residues: Bifunctional uridylyltransferase/uridylyl-removing enzyme (933 aa).

Positions 1 to 379 (MAKISLKLDE…TFQRRKRKLA (379 aa)) are uridylyltransferase. The interval 380-736 (GTSDFIVDNH…VKTHQFEAVT (357 aa)) is uridylyl-removing. Residues 496 to 619 (VDEHLIRCIG…VQSVERLKLL (124 aa)) enclose the HD domain. ACT domains follow at residues 737–818 (EITV…EMIE) and 848–922 (VIEV…GIAP).

The protein belongs to the GlnD family. Requires Mg(2+) as cofactor.

It catalyses the reaction [protein-PII]-L-tyrosine + UTP = [protein-PII]-uridylyl-L-tyrosine + diphosphate. The catalysed reaction is [protein-PII]-uridylyl-L-tyrosine + H2O = [protein-PII]-L-tyrosine + UMP + H(+). Uridylyltransferase (UTase) activity is inhibited by glutamine, while glutamine activates uridylyl-removing (UR) activity. Modifies, by uridylylation and deuridylylation, the PII regulatory proteins (GlnB and homologs), in response to the nitrogen status of the cell that GlnD senses through the glutamine level. Under low glutamine levels, catalyzes the conversion of the PII proteins and UTP to PII-UMP and PPi, while under higher glutamine levels, GlnD hydrolyzes PII-UMP to PII and UMP (deuridylylation). Thus, controls uridylylation state and activity of the PII proteins, and plays an important role in the regulation of nitrogen fixation and metabolism. This is Bifunctional uridylyltransferase/uridylyl-removing enzyme from Mesorhizobium japonicum (strain LMG 29417 / CECT 9101 / MAFF 303099) (Mesorhizobium loti (strain MAFF 303099)).